The following is a 1645-amino-acid chain: Histone-lysine N-methyltransferase set-26 (1645 aa).

5 disordered regions span residues 1-82 (MADG…QQIP), 109-132 (EPAA…RPTE), 200-228 (DAVG…SVAP), 417-606 (TPEQ…VLRP), and 651-789 (TGQS…DEAA). 2 stretches are compositionally biased toward low complexity: residues 16–31 (EQPP…AEPI) and 67–82 (QEFY…QQIP). Positions 207–228 (PGTQYRRNQQTGGGLPSTSVAP) are enriched in polar residues. Low complexity-rich tracts occupy residues 429-443 (RQRA…AAQR) and 453-467 (RPGA…PSMA). Residues 559–578 (MTQEEKNAHFARLTTDKEKP) are compositionally biased toward basic and acidic residues. The span at 592–603 (PHVPPPPPPPLV) shows a compositional bias: pro residues. Positions 651 to 675 (TGQSGSSAAARQRTVSGSAARAQTY) are enriched in polar residues. 2 stretches are compositionally biased toward basic residues: residues 684-699 (QHHH…RHSS) and 731-741 (HRPRGRPKGTR). The span at 780–789 (SESEGIDEAA) shows a compositional bias: acidic residues. The PHD-type zinc-finger motif lies at 794–842 (TMRCHCGMDHGDGDTIECEGCKTWQHMACMGLTLKSNTSKYKCEMCLPR). A disordered region spans residues 865 to 904 (AAKKQKRKSEPVEQKQKSQPSTSRKSAPMALQQQPAEPRV). Positions 881–899 (KSQPSTSRKSAPMALQQQP) are enriched in polar residues. The SET domain occupies 973-1064 (MSNEVKRQPG…RNTEVTLPFD (92 aa)). The span at 1099–1172 (RHRAMDHKKR…EAKERKKMEV (74 aa)) shows a compositional bias: basic and acidic residues. 3 disordered regions span residues 1099 to 1333 (RHRA…SKNV), 1371 to 1536 (SGLL…STEG), and 1548 to 1645 (PLDD…TRWN). Residues 1103–1217 (MDHKKREAEE…GKRKEARRRS (115 aa)) adopt a coiled-coil conformation. Low complexity predominate over residues 1173–1183 (EASAAAAPESS). The segment covering 1188–1210 (AREERRIQQAEEMFRRQEEEGKR) has biased composition (basic and acidic residues). 2 stretches are compositionally biased toward polar residues: residues 1258–1268 (TTQPSTSSFAT) and 1300–1311 (TVATPKDTTASN). Basic and acidic residues-rich tracts occupy residues 1382–1427 (SEVR…KKAN), 1434–1450 (KSEK…EKKP), and 1468–1485 (KKTE…ESSS). Residues 1554-1565 (SSSNTAPTTTIA) show a composition bias toward polar residues.

The protein belongs to the class V-like SAM-binding methyltransferase superfamily. In terms of tissue distribution, expressed both in the germline and in somatic tissues.

It localises to the nucleus. The enzyme catalyses L-lysyl(9)-[histone H3] + 3 S-adenosyl-L-methionine = N(6),N(6),N(6)-trimethyl-L-lysyl(9)-[histone H3] + 3 S-adenosyl-L-homocysteine + 3 H(+). Functionally, histone methyltransferase that mediates trimethylation of 'Lys-9' of histone H3 in vitro. Involved in transcriptional regulation. Plays a role in the negative regulation of lifespan and in heat resistance. Together with set-9, negatively regulates lifespan in a germline-independent, partially daf-16-dependent fashion. Together with set-9, plays a role in germline development and maintenance and might play a role in the restriction of the trimethylation mark on histone H3 'Lys-4'(H3K4me3) to target genes specifically in the germline. Together with spr-5, required for transgenerational fertility. The sequence is that of Histone-lysine N-methyltransferase set-26 from Caenorhabditis elegans.